We begin with the raw amino-acid sequence, 681 residues long: Chaperone protein htpG (681 aa).

Positions 1 to 326 are a; substrate-binding; that stretch reads MQKGNIGVTT…SPDIPLNVSR (326 aa). A b region spans residues 327–545; it reads SYLQSDSNVK…YMRRMKEMAN (219 aa). The segment at 546-681 is c; it reads IQAGMSFYGE…NFVKRSIELI (136 aa). Positions 601–620 are disordered; the sequence is DALKKKQEGKKDEDIPTAEK.

Belongs to the heat shock protein 90 family. In terms of assembly, homodimer.

It is found in the cytoplasm. In terms of biological role, molecular chaperone. Has ATPase activity. The sequence is that of Chaperone protein htpG from Bacteroides fragilis (strain 638R).